The sequence spans 76 residues: Dermaseptin-S7 (76 aa).

The signal sequence occupies residues 1–22 (MDILKKSLFLVLFLGLISLSFC). The propeptide occupies 23 to 45 (EEEKRENEDEEEQEDDEQSEEKR). Residues 25–45 (EKRENEDEEEQEDDEQSEEKR) form a disordered region. Acidic residues predominate over residues 30 to 41 (EDEEEQEDDEQS). The residue at position 73 (Gln73) is a Glutamine amide. A propeptide spanning residues 75–76 (EQ) is cleaved from the precursor.

It belongs to the frog skin active peptide (FSAP) family. Dermaseptin subfamily. As to expression, expressed by the skin glands.

The protein resides in the secreted. Its function is as follows. Antimicrobial peptide. This chain is Dermaseptin-S7, found in Phyllomedusa sauvagei (Sauvage's leaf frog).